Consider the following 3164-residue polypeptide: Large tegument protein deneddylase (3164 aa).

The deubiquitination activity stretch occupies residues 1-273 (MGGGNNTNPG…SETYLQDEAF (273 aa)). In terms of domain architecture, Peptidase C76 spans 45–263 (VVTGARNQFA…TAAALHLYGA (219 aa)). Residues Cys65, Asp197, and His199 contribute to the active site. The tract at residues 289-508 (AGLGEPCVGV…GEDDGPTVPA (220 aa)) is disordered. Pro residues predominate over residues 308–321 (GPHPPTAAQSPPPT). Residues 343–353 (PEAKRPNRAPD) are compositionally biased toward basic and acidic residues. Pro residues predominate over residues 365–390 (PTDPPSADPPSADPPSAIPPPPPSAP). Residues 416–432 (GRHRARYSAGLPKRRRP) are compositionally biased toward basic residues. Residues 426–432 (LPKRRRP) are nuclear localization signal. The segment at 579 to 609 (LELCVIFFFERVLAFLIENGARTHTQAGVAG) is interaction with inner tegument protein. Residues 579–609 (LELCVIFFFERVLAFLIENGARTHTQAGVAG) are interaction with UL37. 3 disordered regions span residues 2296 to 2318 (QTLSPSGGREASPPAPPNALYRP), 2518 to 2552 (HPVYQRAPDDQSPSVPNPTPGPVDLVGAEGSLGPG), and 2583 to 3020 (ASDD…SLSG). The span at 2653–2667 (QSSPAPPDATAPRPP) shows a compositional bias: pro residues. Over residues 2668 to 2680 (ASSRASAASSSGS) the composition is skewed to low complexity. Residues 2681 to 2690 (RARRHRRARS) show a composition bias toward basic residues. Residues 2722–2732 (PPAPPKPPEPA) show a composition bias toward pro residues. The segment covering 2834 to 2843 (PAEPTSSSPA) has biased composition (low complexity). The segment covering 2844–2866 (GPSPPPPAVQPVAPPPTSGPPPT) has biased composition (pro residues). Polar residues predominate over residues 2886–2897 (TRQPVATPTTSA). A run of 35 repeats spans residues 2911–2912 (PQ), 2913–2914 (PQ), 2915–2916 (PQ), 2917–2918 (PQ), 2919–2920 (PQ), 2921–2922 (PQ), 2923–2924 (PQ), 2925–2926 (PQ), 2927–2928 (PQ), 2929–2930 (PQ), 2931–2932 (PQ), 2933–2934 (PQ), 2935–2936 (PQ), 2937–2938 (PQ), 2939–2940 (PQ), 2941–2942 (PQ), 2943–2944 (PQ), 2945–2946 (PQ), 2947–2948 (PQ), 2949–2950 (PQ), 2951–2952 (PQ), 2953–2954 (PQ), 2955–2956 (PQ), 2957–2958 (PQ), 2959–2960 (PQ), 2961–2962 (PQ), 2963–2964 (PQ), 2965–2966 (PQ), 2967–2968 (PQ), 2969–2970 (PQ), 2971–2972 (PQ), 2973–2974 (PQ), 2975–2976 (PQ), 2977–2978 (PQ), and 2979–2980 (PQ). The tract at residues 2911-2980 (PQPQPQPQPQ…PQPQPQPQPQ (70 aa)) is 35 X 2 AA tandem repeats of P-Q. A compositionally biased stretch (pro residues) spans 2912 to 2978 (QPQPQPQPQP…PQPQPQPQPQ (67 aa)). Residues 2999 to 3014 (NRPSVPASASSTNPRT) are compositionally biased toward polar residues.

Belongs to the herpesviridae large tegument protein family. In terms of assembly, interacts with host CUL1 and CUL4A; these interactions inhibit the E3 ligase activity of cullins. Interacts with inner tegument protein. Interacts with capsid vertex specific component CVC2. Interacts with the major capsid protein/MCP. Interacts with VP16; this interaction is important for outer tegument association to the capsid. May form homodimers. Post-translationally, proteolytically processed, possibly into several polypeptides. Enzymatic activity is only detectable following cleavage of the UL36 protein, which occurs late during viral replication.

The protein resides in the virion tegument. Its subcellular location is the host cytoplasm. It localises to the host nucleus. It catalyses the reaction Thiol-dependent hydrolysis of ester, thioester, amide, peptide and isopeptide bonds formed by the C-terminal Gly of ubiquitin (a 76-residue protein attached to proteins as an intracellular targeting signal).. Its function is as follows. Large tegument protein that plays multiple roles in the viral cycle. During viral entry, remains associated with the capsid while most of the tegument is detached and participates in the capsid transport toward the host nucleus. Plays a role in the routing of the capsid at the nuclear pore complex and subsequent uncoating. Within the host nucleus, acts as a deneddylase and promotes the degradation of nuclear CRLs (cullin-RING ubiquitin ligases) and thereby stabilizes nuclear CRL substrates, while cytoplasmic CRLs remain unaffected. These modifications prevent host cell cycle S-phase progression and create a favorable environment allowing efficient viral genome replication. Participates later in the secondary envelopment of capsids. Indeed, plays a linker role for the association of the outer viral tegument to the capsids together with the inner tegument protein. This Human herpesvirus 1 (strain 17) (HHV-1) protein is Large tegument protein deneddylase.